Here is an 80-residue protein sequence, read N- to C-terminus: Translation initiation factor IF-1, chloroplastic (80 aa).

In terms of domain architecture, S1-like spans 1–72; it reads MKKQNLIDME…TKGRIIYRLR (72 aa).

Belongs to the IF-1 family. As to quaternary structure, component of the 30S ribosomal translation pre-initiation complex which assembles on the 30S ribosome in the order IF-2 and IF-3, IF-1 and N-formylmethionyl-tRNA(fMet); mRNA recruitment can occur at any time during PIC assembly.

It localises to the plastid. It is found in the chloroplast. In terms of biological role, one of the essential components for the initiation of protein synthesis. Stabilizes the binding of IF-2 and IF-3 on the 30S subunit to which N-formylmethionyl-tRNA(fMet) subsequently binds. Helps modulate mRNA selection, yielding the 30S pre-initiation complex (PIC). Upon addition of the 50S ribosomal subunit IF-1, IF-2 and IF-3 are released leaving the mature 70S translation initiation complex. The chain is Translation initiation factor IF-1, chloroplastic from Adiantum capillus-veneris (Maidenhair fern).